The sequence spans 286 residues: Protein METABOLIC NETWORK MODULATOR 1 (286 aa).

A compositionally biased stretch (basic and acidic residues) spans 1 to 10 (MEKESHEENN). Disordered regions lie at residues 1–60 (MEKE…DDEA), 123–146 (VMHH…GSGV), and 181–204 (GGER…SGAS). A compositionally biased stretch (basic residues) spans 20–29 (KRKRGRPRKQ). A compositionally biased stretch (basic and acidic residues) spans 30 to 39 (LKLESNEHSL). Residues 131 to 140 (KRGRKSRFRE) are compositionally biased toward basic residues. Positions 191 to 204 (PMQTETGSQASGAS) are enriched in polar residues.

As to expression, mailny observed in young seedlings and in emerging leaves.

Its function is as follows. Lineage-specific modulator of primary metabolism. Influences flowering time. The protein is Protein METABOLIC NETWORK MODULATOR 1 of Arabidopsis thaliana (Mouse-ear cress).